The chain runs to 79 residues: Putative defensin-like protein 80 (79 aa).

The signal sequence occupies residues 1-26 (MDVQRSSYIFIALSIIAMFLITGVKP). 4 cysteine pairs are disulfide-bonded: Cys-32-Cys-65, Cys-36-Cys-58, Cys-44-Cys-63, and Cys-48-Cys-64.

The protein belongs to the DEFL family.

It localises to the secreted. In Arabidopsis thaliana (Mouse-ear cress), this protein is Putative defensin-like protein 80 (LCR81).